Consider the following 194-residue polypeptide: Protein GrpE (194 aa).

Positions 1-44 are disordered; it reads MAEEKQNEELNEQEELNETEAETAEAEQTAAEADAPAEETQTEM. Over residues 9–25 the composition is skewed to acidic residues; that stretch reads ELNEQEELNETEAETAE.

It belongs to the GrpE family. Homodimer.

It is found in the cytoplasm. Functionally, participates actively in the response to hyperosmotic and heat shock by preventing the aggregation of stress-denatured proteins, in association with DnaK and GrpE. It is the nucleotide exchange factor for DnaK and may function as a thermosensor. Unfolded proteins bind initially to DnaJ; upon interaction with the DnaJ-bound protein, DnaK hydrolyzes its bound ATP, resulting in the formation of a stable complex. GrpE releases ADP from DnaK; ATP binding to DnaK triggers the release of the substrate protein, thus completing the reaction cycle. Several rounds of ATP-dependent interactions between DnaJ, DnaK and GrpE are required for fully efficient folding. The chain is Protein GrpE from Bacillus licheniformis (strain ATCC 14580 / DSM 13 / JCM 2505 / CCUG 7422 / NBRC 12200 / NCIMB 9375 / NCTC 10341 / NRRL NRS-1264 / Gibson 46).